Here is a 118-residue protein sequence, read N- to C-terminus: Large ribosomal subunit protein bL19 (118 aa).

This sequence belongs to the bacterial ribosomal protein bL19 family.

Functionally, this protein is located at the 30S-50S ribosomal subunit interface and may play a role in the structure and function of the aminoacyl-tRNA binding site. The chain is Large ribosomal subunit protein bL19 from Metamycoplasma arthritidis (strain 158L3-1) (Mycoplasma arthritidis).